The sequence spans 533 residues: Probable RNA-binding protein 46 (533 aa).

RRM domains lie at 61 to 139 (CEVF…VSLD), 141 to 223 (CRLF…WADP), and 236 to 308 (KVLY…LAKP).

Interacts with YTHDC2, MEIOC, MOV10, CNOT6L, DDX4, UPF1 and PABPC1.

The protein resides in the cytoplasm. Its function is as follows. Essential for male and female fertility, playing a crucial role in regulating germ cell development by ensuring the proper progression of meiosis prophase I. Regulates mitotic-to-meiotic transition in spermatogenesis by forming a complex with MEIOC and YTHDC2 which recognizes and down-regulates mitotic transcripts for a successful meiotic entry. Required for normal synaptonemal complex formation during meiosis, binding meiotic cohesin subunit mRNAs containing GCCUAU/GUUCGA motifs in their 3'UTRs regions and positively regulating their translation. Required for spermatogonial differentiation in both developing and adult testis. The polypeptide is Probable RNA-binding protein 46 (RBM46) (Homo sapiens (Human)).